A 92-amino-acid chain; its full sequence is MPRSLKKGPFIDLHLLKKVEKAVESGDKKPIKTWSRRSTIFPNMIGLTIAVHNGRQHVPVFVSDEMVGHKLGEFAPTRTYRGHAADKKAKKR.

Belongs to the universal ribosomal protein uS19 family.

In terms of biological role, protein S19 forms a complex with S13 that binds strongly to the 16S ribosomal RNA. The polypeptide is Small ribosomal subunit protein uS19 (Photorhabdus laumondii subsp. laumondii (strain DSM 15139 / CIP 105565 / TT01) (Photorhabdus luminescens subsp. laumondii)).